The primary structure comprises 347 residues: NADH-quinone oxidoreductase subunit H (347 aa).

8 helical membrane-spanning segments follow: residues isoleucine 14–leucine 34, alanine 82–isoleucine 102, valine 115–glycine 135, isoleucine 161–valine 181, leucine 198–leucine 218, alanine 258–leucine 278, tryptophan 285–isoleucine 305, and leucine 321–leucine 341.

The protein belongs to the complex I subunit 1 family. NDH-1 is composed of 14 different subunits. Subunits NuoA, H, J, K, L, M, N constitute the membrane sector of the complex.

The protein resides in the cell inner membrane. It catalyses the reaction a quinone + NADH + 5 H(+)(in) = a quinol + NAD(+) + 4 H(+)(out). Functionally, NDH-1 shuttles electrons from NADH, via FMN and iron-sulfur (Fe-S) centers, to quinones in the respiratory chain. The immediate electron acceptor for the enzyme in this species is believed to be ubiquinone. Couples the redox reaction to proton translocation (for every two electrons transferred, four hydrogen ions are translocated across the cytoplasmic membrane), and thus conserves the redox energy in a proton gradient. This subunit may bind ubiquinone. The chain is NADH-quinone oxidoreductase subunit H from Allorhizobium ampelinum (strain ATCC BAA-846 / DSM 112012 / S4) (Agrobacterium vitis (strain S4)).